We begin with the raw amino-acid sequence, 210 residues long: Probable GTP-binding protein EngB (210 aa).

The 175-residue stretch at 30 to 204 (QGYEVAFAGR…YKVLAGWMEL (175 aa)) folds into the EngB-type G domain. Residues 38–45 (GRSNAGKS), 64–68 (GRTQL), 82–85 (DLPG), 149–152 (TKAD), and 182–185 (LFSA) each bind GTP. The Mg(2+) site is built by serine 45 and threonine 66.

This sequence belongs to the TRAFAC class TrmE-Era-EngA-EngB-Septin-like GTPase superfamily. EngB GTPase family. Mg(2+) serves as cofactor.

In terms of biological role, necessary for normal cell division and for the maintenance of normal septation. This is Probable GTP-binding protein EngB from Pseudomonas putida (strain W619).